Consider the following 347-residue polypeptide: Methionine import ATP-binding protein MetN (347 aa).

The 240-residue stretch at 2–241 (IKLEGVSKTY…PATRLGRDFL (240 aa)) folds into the ABC transporter domain. Position 38–45 (38–45 (GLSGAGKS)) interacts with ATP.

It belongs to the ABC transporter superfamily. Methionine importer (TC 3.A.1.24) family. As to quaternary structure, the complex is composed of two ATP-binding proteins (MetN), two transmembrane proteins (MetI) and a solute-binding protein (MetQ).

It localises to the cell inner membrane. The enzyme catalyses L-methionine(out) + ATP + H2O = L-methionine(in) + ADP + phosphate + H(+). It catalyses the reaction D-methionine(out) + ATP + H2O = D-methionine(in) + ADP + phosphate + H(+). Functionally, part of the ABC transporter complex MetNIQ involved in methionine import. Responsible for energy coupling to the transport system. This is Methionine import ATP-binding protein MetN from Chromohalobacter salexigens (strain ATCC BAA-138 / DSM 3043 / CIP 106854 / NCIMB 13768 / 1H11).